We begin with the raw amino-acid sequence, 187 residues long: Decorin-binding protein B (187 aa).

The N-terminal stretch at 1 to 20 (MKIGKLNSIVIALFFKLLVA) is a signal peptide.

This sequence belongs to the decorin-binding protein family.

Binds to decorin which may mediate the adherence of B.burgdorferi to collagen fibers in skin and other tissues. In Borreliella burgdorferi (strain ATCC 35210 / DSM 4680 / CIP 102532 / B31) (Borrelia burgdorferi), this protein is Decorin-binding protein B (dbpB).